Reading from the N-terminus, the 418-residue chain is MYKKIKLRDQQISELINLESKRQNSQIELIASENYASEDVILANGTSPSNKYGEGYPGKRYYGGCTFIDQIEKIAIERVKKLFKIEYANVQPYSGSSANAAVFAALLKPGDKILGLDLNAGGHLSHGYKINFSGMFYSGISYFLDENELLDYDAIEKIALKTKPNLIICGYSAYSRKIDFARFRQIADKVNAFLLADIAHIAGLIAAGQHPSPVGYAHIITSTTQKTLRGPRGGLILTNSKEIAAKIDKVVFPGIQGGPFFHTIAAKAVAFKEALEPWFKEYCAQIVKNASHFASEFIKKGIRIVSQGTENHLFTIDVLSSYNLNGKQAQILLESVNIITNKNTIPNDTLSPFVTSGLRLGTPAMTSRGFKEQEFSQMAEIIDFVLRKKELNALEIKEIKKKVKILTKNFPIKKSYWP.

Residues Leu-118 and 122–124 (GHL) contribute to the (6S)-5,6,7,8-tetrahydrofolate site. Position 226 is an N6-(pyridoxal phosphate)lysine (Lys-226). (6S)-5,6,7,8-tetrahydrofolate is bound at residue 351–353 (SPF).

The protein belongs to the SHMT family. In terms of assembly, homodimer. The cofactor is pyridoxal 5'-phosphate.

It localises to the cytoplasm. It carries out the reaction (6R)-5,10-methylene-5,6,7,8-tetrahydrofolate + glycine + H2O = (6S)-5,6,7,8-tetrahydrofolate + L-serine. It functions in the pathway one-carbon metabolism; tetrahydrofolate interconversion. In terms of biological role, catalyzes the reversible interconversion of serine and glycine with tetrahydrofolate (THF) serving as the one-carbon carrier. This reaction serves as the major source of one-carbon groups required for the biosynthesis of purines, thymidylate, methionine, and other important biomolecules. The polypeptide is Probable serine hydroxymethyltransferase (Mesomycoplasma hyopneumoniae (strain J / ATCC 25934 / NCTC 10110) (Mycoplasma hyopneumoniae)).